The primary structure comprises 404 residues: Cysteine desulfurase IscS (404 aa).

Residues Ala75 to Thr76, Asn155, Gln183, and Ser203 to His205 contribute to the pyridoxal 5'-phosphate site. Lys206 is modified (N6-(pyridoxal phosphate)lysine). Residue Thr243 coordinates pyridoxal 5'-phosphate. Cys328 functions as the Cysteine persulfide intermediate in the catalytic mechanism. Residue Cys328 coordinates [2Fe-2S] cluster.

Belongs to the class-V pyridoxal-phosphate-dependent aminotransferase family. NifS/IscS subfamily. As to quaternary structure, homodimer. Forms a heterotetramer with IscU, interacts with other sulfur acceptors. Pyridoxal 5'-phosphate serves as cofactor.

The protein resides in the cytoplasm. The catalysed reaction is (sulfur carrier)-H + L-cysteine = (sulfur carrier)-SH + L-alanine. It functions in the pathway cofactor biosynthesis; iron-sulfur cluster biosynthesis. Master enzyme that delivers sulfur to a number of partners involved in Fe-S cluster assembly, tRNA modification or cofactor biosynthesis. Catalyzes the removal of elemental sulfur atoms from cysteine to produce alanine. Functions as a sulfur delivery protein for Fe-S cluster synthesis onto IscU, an Fe-S scaffold assembly protein, as well as other S acceptor proteins. This is Cysteine desulfurase IscS from Neisseria meningitidis serogroup C (strain 053442).